Reading from the N-terminus, the 280-residue chain is MIAAPTQLAIMPFPNIDPIALSIGPLAIHWYGIAYVAGIMLGWFYARRLARTDRLWPNDTSPISAQHLDDFILWAAGGIVLGGRIGYILFYDMAAVAANPIRAIEIWNGGMSFHGGLIGTTIAMILFARRNGIPVWSMFDIIAAVAPIGLLFGRIANFINGELWGRIADVPWAVVFPTGGPFARHPSQLYEAGLEGLVLVVLLAIAIYVFKALKTPGTVTGIFVCGYALSRIFVEFFREPDAQIGYLAGNWLTMGMVLSTPMFLLGLWAVLRARSATKSA.

4 consecutive transmembrane segments (helical) span residues Leu26–Ala46, Phe71–Tyr91, Ile106–Leu126, and Gly132–Phe152. A 1,2-diacyl-sn-glycero-3-phospho-(1'-sn-glycerol) is bound at residue Arg154. 3 consecutive transmembrane segments (helical) span residues Gly193 to Leu213, Gly217 to Phe237, and Trp251 to Leu271.

The protein belongs to the Lgt family.

It is found in the cell inner membrane. It carries out the reaction L-cysteinyl-[prolipoprotein] + a 1,2-diacyl-sn-glycero-3-phospho-(1'-sn-glycerol) = an S-1,2-diacyl-sn-glyceryl-L-cysteinyl-[prolipoprotein] + sn-glycerol 1-phosphate + H(+). It participates in protein modification; lipoprotein biosynthesis (diacylglyceryl transfer). Functionally, catalyzes the transfer of the diacylglyceryl group from phosphatidylglycerol to the sulfhydryl group of the N-terminal cysteine of a prolipoprotein, the first step in the formation of mature lipoproteins. In Agrobacterium fabrum (strain C58 / ATCC 33970) (Agrobacterium tumefaciens (strain C58)), this protein is Phosphatidylglycerol--prolipoprotein diacylglyceryl transferase.